Consider the following 204-residue polypeptide: Tumor necrosis factor alpha-induced protein 8-like protein 3 (204 aa).

The segment covering 1–10 (MDSDSGEQSE) has biased composition (acidic residues). Residues 1–20 (MDSDSGEQSEGEPGTAAGPH) are disordered. A binding to phosphoinositides region spans residues 21–204 (VFSSKNLALQ…INKLLDDKIL (184 aa)).

Belongs to the TNFAIP8 family. In terms of tissue distribution, widely expressed (at protein level).

It is found in the cytoplasm. The protein resides in the cell membrane. Its function is as follows. Acts as a lipid transfer protein. Preferentially captures and shuttles two lipid second messengers, i.e., phosphatidylinositol 4,5- bisphosphate and phosphatidylinositol 3,4,5-trisphosphate and increases their levels in the plasma membrane. Additionally, may also function as a lipid-presenting protein to enhance the activity of the PI3K-AKT and MEK-ERK pathways. May act as a regulator of tumorigenesis through its activation of phospholipid signaling. This Mus musculus (Mouse) protein is Tumor necrosis factor alpha-induced protein 8-like protein 3 (Tnfaip8l3).